The following is a 562-amino-acid chain: SLAIN motif-containing protein-like (562 aa).

3 disordered regions span residues Gln292–Leu313, His344–His381, and Ser409–Tyr562. Low complexity-rich tracts occupy residues Ala295–His311 and Arg345–Arg355. Composition is skewed to polar residues over residues Cys356 to Arg370, Gln424 to Pro442, Val465 to Pro531, and Ser539 to Gly553.

The protein belongs to the SLAIN motif-containing family.

The polypeptide is SLAIN motif-containing protein-like (Xenopus laevis (African clawed frog)).